The following is a 2883-amino-acid chain: Bifunctional DNA-directed RNA polymerase subunit beta-beta' (2883 aa).

A DNA-directed RNA polymerase subunit beta region spans residues 1–1377 (MPTTLKSGNR…DVTVYGETEE (1377 aa)). The tract at residues 1382–2883 (PMPIKEDDRP…IRIKEKTEGA (1502 aa)) is DNA-directed RNA polymerase subunit beta'. The Zn(2+) site is built by cysteine 1447, cysteine 1449, cysteine 1462, and cysteine 1465. The Mg(2+) site is built by aspartate 1846, aspartate 1848, and aspartate 1850. The Zn(2+) site is built by cysteine 2176, cysteine 2250, cysteine 2257, and cysteine 2260.

The protein in the N-terminal section; belongs to the RNA polymerase beta chain family. It in the C-terminal section; belongs to the RNA polymerase beta' chain family. In terms of assembly, the RNAP catalytic core consists of 2 alpha, 1 beta/beta' and 1 omega subunit. When a sigma factor is associated with the core the holoenzyme is formed, which can initiate transcription. Mg(2+) is required as a cofactor. Zn(2+) serves as cofactor.

It carries out the reaction RNA(n) + a ribonucleoside 5'-triphosphate = RNA(n+1) + diphosphate. Its function is as follows. DNA-dependent RNA polymerase catalyzes the transcription of DNA into RNA using the four ribonucleoside triphosphates as substrates. In Wolinella succinogenes (strain ATCC 29543 / DSM 1740 / CCUG 13145 / JCM 31913 / LMG 7466 / NCTC 11488 / FDC 602W) (Vibrio succinogenes), this protein is Bifunctional DNA-directed RNA polymerase subunit beta-beta' (rpoBC).